The following is a 792-amino-acid chain: E3 UFM1-protein ligase 1 (792 aa).

Ala2 is subject to N-acetylalanine. The interval 2–200 (ADAWEEIRRL…RGLFSAITRP (199 aa)) is mediates interaction with DDRGK1. Residues 2-212 (ADAWEEIRRL…VNSLISRYGF (211 aa)) are required for E3 UFM1-protein ligase activity. Positions 121-250 (DRLAEEVNDK…KAVFIPDIYS (130 aa)) are involved in CDK5RAP3-binding. A mediates interaction with TRIP4 region spans residues 200 to 400 (PTAVNSLISR…NPVHLITEED (201 aa)). The tract at residues 412–471 (TSKKDKKDERRRKATEGSGSVRGGGGSNAREYKIKKTKKKGRKDDDSDDESSHTGKKKPE) is disordered. Arg433 carries the omega-N-methylarginine modification. Basic and acidic residues predominate over residues 453–471 (RKDDDSDDESSHTGKKKPE). The residue at position 458 (Ser458) is a Phosphoserine. Positions 488-682 (LQDAPEEFIS…QLKVTEDPAL (195 aa)) are mediates interaction with CDK5RAP3. Thr534 bears the Phosphothreonine mark. Ser752 is modified (phosphoserine).

It belongs to the UFL1 family. Catalytic component of the UFM1 ribosome E3 ligase (UREL) complex, composed of UFL1, DDRGK1 and CDK5RAP3. Interacts with E2-like enzyme UFC1. Interacts with RELA. Interacts with NBN; promoting recruitment to double-strand breaks following DNA damage. Interacts (when phosphorylated) with YWHAG/14-3-3-gamma; sequestering UFL1 and preventing its association with PDCD1/PD-1 substrate. Ubiquitinated, leading to its degradation by the proteasome. Interaction with CDK5RAP3 protects both proteins against ubiquitination and degradation via the proteasome. Post-translationally, phosphorylation at Thr-534 by AMPK promotes its interaction with YWHAG/14-3-3-gamma, thereby preventing UFL1 association with PDCD1/PD-1 substrate.

The protein localises to the endoplasmic reticulum membrane. The protein resides in the cytoplasm. It localises to the cytosol. Its subcellular location is the nucleus. It is found in the chromosome. In terms of biological role, E3 protein ligase that mediates ufmylation, the covalent attachment of the ubiquitin-like modifier UFM1 to lysine residues on target proteins, and which plays a key role in various processes, such as ribosome recycling, response to DNA damage, interferon response or reticulophagy (also called ER-phagy). Catalyzes ufmylation of many protein, such as CD274/PD-L1, CDK5RAP3, CYB5R3, DDRGK1, EIF6, histone H4, MRE11, P4HB, PDCD1/PD-1, TRIP4, RPN1, RPS20/uS10, RPL10/uL16, RPL26/uL24, SYVN1/HRD1 and TP53/p53. As part of the UREL complex, plays a key role in ribosome recycling by catalyzing mono-ufmylation of RPL26/uL24 subunit of the 60S ribosome. Ufmylation of RPL26/uL24 occurs on free 60S ribosomes following ribosome dissociation: it weakens the junction between post-termination 60S subunits and SEC61 translocons, promoting release and recycling of the large ribosomal subunit from the endoplasmic reticulum membrane. Ufmylation of RPL26/uL24 and subsequent 60S ribosome recycling either take place after normal termination of translation or after ribosome stalling during cotranslational translocation at the endoplasmic reticulum. Involved in reticulophagy in response to endoplasmic reticulum stress by mediating ufmylation of proteins such as CYB5R3 and RPN1, thereby promoting lysosomal degradation of ufmylated proteins. Ufmylation in response to endoplasmic reticulum stress is essential for processes such as hematopoiesis, blood vessel morphogenesis or inflammatory response. Regulates inflammation in response to endoplasmic reticulum stress by promoting reticulophagy, leading to inhibit the activity of the NF-kappa-B transcription factor. Mediates ufmylation of DDRGK1 and CDK5RAP3; the role of these modifications is however unclear: as both DDRGK1 and CDK5RAP3 act as substrate adapters for ufmylation, it is uncertain whether ufmylation of these proteins is, a collateral effect or is required for ufmylation. Acts as a negative regulator of T-cell activation by mediating ufmylation and stabilization of PDCD1/PD-1. Also involved in the response to DNA damage: recruited to double-strand break sites following DNA damage and mediates monoufmylation of histone H4 and ufmylation of MRE11. Mediates ufmylation of TP53/p53, promoting its stability. Catalyzes ufmylation of TRIP4, thereby playing a role in nuclear receptor-mediated transcription. Required for hematopoietic stem cell function and hematopoiesis. The sequence is that of E3 UFM1-protein ligase 1 from Bos taurus (Bovine).